A 386-amino-acid polypeptide reads, in one-letter code: Putative 8-amino-7-oxononanoate synthase (386 aa).

Arginine 22 contributes to the substrate binding site. Residue 109 to 110 participates in pyridoxal 5'-phosphate binding; that stretch reads GY. A substrate-binding site is contributed by histidine 134. Pyridoxal 5'-phosphate-binding positions include serine 182, 207 to 210, and 238 to 241; these read DEAH and TLSK. At lysine 241 the chain carries N6-(pyridoxal phosphate)lysine. Threonine 356 contacts substrate.

It belongs to the class-II pyridoxal-phosphate-dependent aminotransferase family. BioF subfamily. Homodimer. It depends on pyridoxal 5'-phosphate as a cofactor.

The catalysed reaction is 6-carboxyhexanoyl-[ACP] + L-alanine + H(+) = (8S)-8-amino-7-oxononanoate + holo-[ACP] + CO2. Its pathway is cofactor biosynthesis; biotin biosynthesis. Its function is as follows. Catalyzes the decarboxylative condensation of pimeloyl-[acyl-carrier protein] and L-alanine to produce 8-amino-7-oxononanoate (AON), [acyl-carrier protein], and carbon dioxide. The polypeptide is Putative 8-amino-7-oxononanoate synthase (bioF) (Trichormus variabilis (strain ATCC 29413 / PCC 7937) (Anabaena variabilis)).